A 106-amino-acid polypeptide reads, in one-letter code: Probable insulin-like peptide beta-type 2 (106 aa).

The N-terminal stretch at 1–15 is a signal peptide; sequence MNAIIFCLLFTTVTA. Positions 16-56 are excised as a propeptide; that stretch reads TYEVFGKGIEHRNEHLIINQLDIIPVESTPTPNRASRVQKR. Intrachain disulfides connect Cys58–Cys86, Cys70–Cys99, Cys73–Cys100, and Cys85–Cys90.

Belongs to the insulin family.

It localises to the secreted. In Caenorhabditis elegans, this protein is Probable insulin-like peptide beta-type 2 (ins-2).